Reading from the N-terminus, the 329-residue chain is Acetyl-coenzyme A carboxylase carboxyl transferase subunit alpha (329 aa).

Residues 40–294 (QLETLAARRR…KTSILRHLTE (255 aa)) enclose the CoA carboxyltransferase C-terminal domain.

Belongs to the AccA family. As to quaternary structure, acetyl-CoA carboxylase is a heterohexamer composed of biotin carboxyl carrier protein (AccB), biotin carboxylase (AccC) and two subunits each of ACCase subunit alpha (AccA) and ACCase subunit beta (AccD).

It is found in the cytoplasm. The catalysed reaction is N(6)-carboxybiotinyl-L-lysyl-[protein] + acetyl-CoA = N(6)-biotinyl-L-lysyl-[protein] + malonyl-CoA. It participates in lipid metabolism; malonyl-CoA biosynthesis; malonyl-CoA from acetyl-CoA: step 1/1. Component of the acetyl coenzyme A carboxylase (ACC) complex. First, biotin carboxylase catalyzes the carboxylation of biotin on its carrier protein (BCCP) and then the CO(2) group is transferred by the carboxyltransferase to acetyl-CoA to form malonyl-CoA. This is Acetyl-coenzyme A carboxylase carboxyl transferase subunit alpha from Prochlorococcus marinus (strain SARG / CCMP1375 / SS120).